Consider the following 100-residue polypeptide: Cell division topological specificity factor (100 aa).

Belongs to the MinE family.

Its function is as follows. Prevents the cell division inhibition by proteins MinC and MinD at internal division sites while permitting inhibition at polar sites. This ensures cell division at the proper site by restricting the formation of a division septum at the midpoint of the long axis of the cell. This is Cell division topological specificity factor from Synechococcus sp. (strain JA-2-3B'a(2-13)) (Cyanobacteria bacterium Yellowstone B-Prime).